Here is a 673-residue protein sequence, read N- to C-terminus: DNA ligase (673 aa).

NAD(+) contacts are provided by residues Asp33 to Asp37, Ser82 to Leu83, and Glu114. Lys116 functions as the N6-AMP-lysine intermediate in the catalytic mechanism. Arg137, Glu174, Lys291, and Lys315 together coordinate NAD(+). Zn(2+)-binding residues include Cys409, Cys412, Cys427, and Cys433. Positions Ala592–Gly673 constitute a BRCT domain.

This sequence belongs to the NAD-dependent DNA ligase family. LigA subfamily. Mg(2+) serves as cofactor. The cofactor is Mn(2+).

The catalysed reaction is NAD(+) + (deoxyribonucleotide)n-3'-hydroxyl + 5'-phospho-(deoxyribonucleotide)m = (deoxyribonucleotide)n+m + AMP + beta-nicotinamide D-nucleotide.. Functionally, DNA ligase that catalyzes the formation of phosphodiester linkages between 5'-phosphoryl and 3'-hydroxyl groups in double-stranded DNA using NAD as a coenzyme and as the energy source for the reaction. It is essential for DNA replication and repair of damaged DNA. In Pseudoalteromonas translucida (strain TAC 125), this protein is DNA ligase.